A 349-amino-acid chain; its full sequence is Phosphate carrier protein, mitochondrial (349 aa).

Solcar repeat units lie at residues 47–131 (KYFA…FKVQ), 144–229 (YRTF…TVEL), and 246–324 (EQLV…VKVW). Helical transmembrane passes span 48–68 (YFAL…TAVV), 108–128 (APTF…YEVF), 147–167 (FVYL…LSPL), 207–227 (PLWG…EKTV), 248–268 (LVVT…VSHP), and 304–324 (IIMI…VKVW).

This sequence belongs to the mitochondrial carrier (TC 2.A.29) family.

Its subcellular location is the mitochondrion inner membrane. Its function is as follows. Transport of phosphate groups from the cytosol to the mitochondrial matrix. This chain is Phosphate carrier protein, mitochondrial, found in Choristoneura fumiferana (Spruce budworm moth).